The sequence spans 113 residues: Nucleoid-associated protein Cthe_2143 (113 aa).

Belongs to the YbaB/EbfC family. In terms of assembly, homodimer.

It is found in the cytoplasm. Its subcellular location is the nucleoid. Its function is as follows. Binds to DNA and alters its conformation. May be involved in regulation of gene expression, nucleoid organization and DNA protection. The protein is Nucleoid-associated protein Cthe_2143 of Acetivibrio thermocellus (strain ATCC 27405 / DSM 1237 / JCM 9322 / NBRC 103400 / NCIMB 10682 / NRRL B-4536 / VPI 7372) (Clostridium thermocellum).